The primary structure comprises 319 residues: Acetyl-coenzyme A carboxylase carboxyl transferase subunit alpha (319 aa).

A CoA carboxyltransferase C-terminal domain is found at 35 to 296 (DLDKEIKQLE…KQRLIEQLNE (262 aa)).

Belongs to the AccA family. Acetyl-CoA carboxylase is a heterohexamer composed of biotin carboxyl carrier protein (AccB), biotin carboxylase (AccC) and two subunits each of ACCase subunit alpha (AccA) and ACCase subunit beta (AccD).

It is found in the cytoplasm. The enzyme catalyses N(6)-carboxybiotinyl-L-lysyl-[protein] + acetyl-CoA = N(6)-biotinyl-L-lysyl-[protein] + malonyl-CoA. Its pathway is lipid metabolism; malonyl-CoA biosynthesis; malonyl-CoA from acetyl-CoA: step 1/1. Component of the acetyl coenzyme A carboxylase (ACC) complex. First, biotin carboxylase catalyzes the carboxylation of biotin on its carrier protein (BCCP) and then the CO(2) group is transferred by the carboxyltransferase to acetyl-CoA to form malonyl-CoA. The chain is Acetyl-coenzyme A carboxylase carboxyl transferase subunit alpha from Aliivibrio salmonicida (strain LFI1238) (Vibrio salmonicida (strain LFI1238)).